The primary structure comprises 721 residues: MAEPITKEQPPPPAPDPNSTYPPPSDFDSISIPPLDDHFSDQTPIGELMSDLGFPDGEFELTFDGMDDLYFPAENESFLIPINTSNQEQFGDFTPESESSGISGDCIVPKDADKTITTSGCINRESPRDSDDRCSGADHNLDLPTPLSSQGSGNCGSDVSEATNESSPKSRNVAVDQKVKVEEAATTTTSITKRKKEIDEDLTDESRNSKYRRSGEDADASAVTGEEDEKKRARLMRNRESAQLSRQRKKHYVEELEEKVRNMHSTITDLNGKISYFMAENATLRQQLGGNGMCPPHLPPPPMGMYPPMAPMPYPWMPCPPYMVKQQGSQVPLIPIPRLKPQNTLGTSKAKKSESKKSEAKTKKVASISFLGLLFCLFLFGALAPIVNVNYGGISGAFYGNYRSNYITDQIYSQHRDRVLDTSRSGAGTGVSNSNGMHRGRDSDRGARKNISATESSVTPGNGSEPLVASLFVPRNDKLVKIDGNLIINSILASEKAVASRKASESKERKADLMISKDYTPALPLPDVGRTEELAKHLYRSKAEKQKALSSGSADTLKDQVKTKAANGEMQQWFREGVAGPMFSSGMCTEVFQFDVSSTSGAIIPAATNVSAEHGKNTTDTHKQQNRRILRGLPIPLPGSDFNLTKEHQRNSSSKEIKPASSMVVSVLVDPREGGDGDIDGMIGGPKSLSRVFVVVLLDSAKYVTYSCVLPRSGAPHLVTT.

Disordered stretches follow at residues 1-51 (MAEP…LMSD) and 87-232 (QEQF…EKKR). Topologically, residues 1 to 366 (MAEPITKEQP…KSEAKTKKVA (366 aa)) are cytoplasmic. The segment covering 9-25 (QPPPPAPDPNSTYPPPS) has biased composition (pro residues). Residues 125-141 (ESPRDSDDRCSGADHNL) show a composition bias toward basic and acidic residues. The span at 146–170 (PLSSQGSGNCGSDVSEATNESSPKS) shows a compositional bias: polar residues. The span at 204–216 (DESRNSKYRRSGE) shows a compositional bias: basic and acidic residues. Residues 228 to 288 (DEKKRARLMR…AENATLRQQL (61 aa)) form the bZIP domain. The interval 230 to 261 (KKRARLMRNRESAQLSRQRKKHYVEELEEKVR) is basic motif. A leucine-zipper region spans residues 267-274 (ITDLNGKI). Residues 337-359 (PRLKPQNTLGTSKAKKSESKKSE) form a disordered region. The helical transmembrane segment at 367–387 (SISFLGLLFCLFLFGALAPIV) threads the bilayer. Residues 388–721 (NVNYGGISGA…RSGAPHLVTT (334 aa)) are Lumenal-facing. Residues 422–436 (TSRSGAGTGVSNSNG) show a composition bias toward polar residues. The interval 422-462 (TSRSGAGTGVSNSNGMHRGRDSDRGARKNISATESSVTPGN) is disordered. N-linked (GlcNAc...) asparagine glycans are attached at residues Asn-450, Asn-462, Asn-609, and Asn-617. Polar residues predominate over residues 451-462 (ISATESSVTPGN). Positions 627-630 (RRIL) match the RRIL cleavage motif motif. N-linked (GlcNAc...) asparagine glycans are attached at residues Asn-643 and Asn-651.

This sequence belongs to the bZIP family. In terms of assembly, interacts with BZIP28.

It is found in the endoplasmic reticulum membrane. Its subcellular location is the golgi apparatus membrane. The protein resides in the nucleus. In terms of biological role, transcriptional activator involved in salt and osmotic stress responses. Functions as a stress sensor and transducer in a signaling pathway that resembles an ER stress response. Following salt stress, BZIP17 is cleaved by SBT6.1 (S1P) and S2P at the C-terminus and the N-terminal bZIP component is translocated to the nucleus, where it activates the expression of salt stress response genes. Functions as a stress sensor and transducer in ER stress signaling pathway. ER stress induces proteolysis of BZIP17 by SBT6.1 (S1P) and S2P, and the N-terminal bZIP component is translocated to the nucleus, where it activates the expression and production of ER chaperones, as well as protein involved in brassinosteroid (BR) signaling, which is required for stress acclimation and growth. This chain is bZIP transcription factor 17, found in Arabidopsis thaliana (Mouse-ear cress).